Here is a 224-residue protein sequence, read N- to C-terminus: UPF0173 metal-dependent hydrolase EF_1371 (224 aa).

Belongs to the UPF0173 family.

In Enterococcus faecalis (strain ATCC 700802 / V583), this protein is UPF0173 metal-dependent hydrolase EF_1371.